A 430-amino-acid polypeptide reads, in one-letter code: tRNA(Ile)-lysidine synthase (430 aa).

Position 24–29 (24–29 (SGGLDS)) interacts with ATP.

This sequence belongs to the tRNA(Ile)-lysidine synthase family.

The protein resides in the cytoplasm. It carries out the reaction cytidine(34) in tRNA(Ile2) + L-lysine + ATP = lysidine(34) in tRNA(Ile2) + AMP + diphosphate + H(+). Ligates lysine onto the cytidine present at position 34 of the AUA codon-specific tRNA(Ile) that contains the anticodon CAU, in an ATP-dependent manner. Cytidine is converted to lysidine, thus changing the amino acid specificity of the tRNA from methionine to isoleucine. The protein is tRNA(Ile)-lysidine synthase of Haemophilus influenzae (strain PittGG).